A 282-amino-acid chain; its full sequence is 2-dehydro-3-deoxyphosphooctonate aldolase (282 aa).

It belongs to the KdsA family.

Its subcellular location is the cytoplasm. The catalysed reaction is D-arabinose 5-phosphate + phosphoenolpyruvate + H2O = 3-deoxy-alpha-D-manno-2-octulosonate-8-phosphate + phosphate. The protein operates within carbohydrate biosynthesis; 3-deoxy-D-manno-octulosonate biosynthesis; 3-deoxy-D-manno-octulosonate from D-ribulose 5-phosphate: step 2/3. Its pathway is bacterial outer membrane biogenesis; lipopolysaccharide biosynthesis. This Shewanella sp. (strain MR-4) protein is 2-dehydro-3-deoxyphosphooctonate aldolase.